The primary structure comprises 1070 residues: Alpha-glucosidase (1070 aa).

The signal sequence occupies residues 1–35; the sequence is MRSIKAASLTPLLAALFTTLSSTLALPSSVWEHQL. N-linked (GlcNAc...) asparagine glycosylation is found at N48, N99, N144, N161, N208, N384, N458, N480, and N513. D526 serves as the catalytic Nucleophile. E529 is a catalytic residue. 5 N-linked (GlcNAc...) asparagine glycosylation sites follow: N544, N566, N574, N578, and N635. The Proton donor role is filled by D730. Residues N818, N885, N916, N983, N992, N996, N1008, N1029, N1043, and N1052 are each glycosylated (N-linked (GlcNAc...) asparagine).

Belongs to the glycosyl hydrolase 31 family.

The enzyme catalyses Hydrolysis of terminal, non-reducing (1-&gt;4)-linked alpha-D-glucose residues with release of alpha-D-glucose.. Hydrolyzes a broad range of alpha-D-linked glucopyranosides, including maltose (alpha-1,4), sucrose (alpha-1,2), isomaltose (alpha-1,6) and turanose (alpha-1,3). This chain is Alpha-glucosidase, found in Candida tsukubaensis (Yeast).